We begin with the raw amino-acid sequence, 378 residues long: S-adenosylmethionine:tRNA ribosyltransferase-isomerase (378 aa).

The protein belongs to the QueA family. In terms of assembly, monomer.

Its subcellular location is the cytoplasm. It carries out the reaction 7-aminomethyl-7-carbaguanosine(34) in tRNA + S-adenosyl-L-methionine = epoxyqueuosine(34) in tRNA + adenine + L-methionine + 2 H(+). It participates in tRNA modification; tRNA-queuosine biosynthesis. Its function is as follows. Transfers and isomerizes the ribose moiety from AdoMet to the 7-aminomethyl group of 7-deazaguanine (preQ1-tRNA) to give epoxyqueuosine (oQ-tRNA). This is S-adenosylmethionine:tRNA ribosyltransferase-isomerase from Prochlorococcus marinus (strain MIT 9312).